The chain runs to 98 residues: Integration host factor subunit alpha (98 aa).

The interval 49-70 (FGNFDLRDKNQRPGRNPKTGED) is disordered.

The protein belongs to the bacterial histone-like protein family. As to quaternary structure, heterodimer of an alpha and a beta chain.

Functionally, this protein is one of the two subunits of integration host factor, a specific DNA-binding protein that functions in genetic recombination as well as in transcriptional and translational control. The chain is Integration host factor subunit alpha from Serratia proteamaculans (strain 568).